The chain runs to 66 residues: DNA-directed RNA polymerase subunit Rpo10 (66 aa).

Zn(2+)-binding residues include C7, C10, C44, and C45.

The protein belongs to the archaeal Rpo10/eukaryotic RPB10 RNA polymerase subunit family. Part of the RNA polymerase complex. Requires Zn(2+) as cofactor.

Its subcellular location is the cytoplasm. The catalysed reaction is RNA(n) + a ribonucleoside 5'-triphosphate = RNA(n+1) + diphosphate. DNA-dependent RNA polymerase (RNAP) catalyzes the transcription of DNA into RNA using the four ribonucleoside triphosphates as substrates. This Pyrobaculum neutrophilum (strain DSM 2338 / JCM 9278 / NBRC 100436 / V24Sta) (Thermoproteus neutrophilus) protein is DNA-directed RNA polymerase subunit Rpo10.